A 417-amino-acid polypeptide reads, in one-letter code: Serine hydroxymethyltransferase (417 aa).

(6S)-5,6,7,8-tetrahydrofolate contacts are provided by residues leucine 121 and glycine 125–leucine 127. N6-(pyridoxal phosphate)lysine is present on lysine 229. (6S)-5,6,7,8-tetrahydrofolate is bound at residue serine 355–phenylalanine 357.

It belongs to the SHMT family. Homodimer. It depends on pyridoxal 5'-phosphate as a cofactor.

The protein localises to the cytoplasm. It catalyses the reaction (6R)-5,10-methylene-5,6,7,8-tetrahydrofolate + glycine + H2O = (6S)-5,6,7,8-tetrahydrofolate + L-serine. The protein operates within one-carbon metabolism; tetrahydrofolate interconversion. It functions in the pathway amino-acid biosynthesis; glycine biosynthesis; glycine from L-serine: step 1/1. Its function is as follows. Catalyzes the reversible interconversion of serine and glycine with tetrahydrofolate (THF) serving as the one-carbon carrier. This reaction serves as the major source of one-carbon groups required for the biosynthesis of purines, thymidylate, methionine, and other important biomolecules. Also exhibits THF-independent aldolase activity toward beta-hydroxyamino acids, producing glycine and aldehydes, via a retro-aldol mechanism. This Yersinia pestis bv. Antiqua (strain Antiqua) protein is Serine hydroxymethyltransferase.